Reading from the N-terminus, the 194-residue chain is GTP cyclohydrolase 1 (194 aa).

Cys83, His86, and Cys155 together coordinate Zn(2+).

Belongs to the GTP cyclohydrolase I family. As to quaternary structure, toroid-shaped homodecamer, composed of two pentamers of five dimers.

It catalyses the reaction GTP + H2O = 7,8-dihydroneopterin 3'-triphosphate + formate + H(+). The protein operates within cofactor biosynthesis; 7,8-dihydroneopterin triphosphate biosynthesis; 7,8-dihydroneopterin triphosphate from GTP: step 1/1. The chain is GTP cyclohydrolase 1 from Streptococcus pyogenes serotype M3 (strain ATCC BAA-595 / MGAS315).